A 941-amino-acid chain; its full sequence is Myosin heavy chain kinase D (941 aa).

A coiled-coil region spans residues 8–48 (KLSKKIEKILEKNDYLKKKVEQLTKSVDNHEFKIQELLLLL). 3 stretches are compositionally biased toward low complexity: residues 57 to 70 (TTTT…NNST), 84 to 115 (TSTD…TTTS), and 124 to 206 (NSNN…PQLS). 2 disordered regions span residues 57–234 (TTTT…KEDS) and 276–310 (SSNN…QQQQ). Residues 289 to 317 (SILNDQQNQQQNQQQQNQQQQQEEINFIT) adopt a coiled-coil conformation. An Alpha-type protein kinase domain is found at 337-582 (EYSANDDEWT…ICLQFGLPPI (246 aa)). WD repeat units lie at residues 635–674 (GHDE…DLSK), 683–720 (AHRR…TTTT), 741–780 (DHTA…CIKS), 783–820 (AHGK…CVYG), 824–861 (AHDA…PTTT), 864–902 (QHNM…EPIK), and 909–941 (AHRS…WKNK).

The protein belongs to the protein kinase superfamily. Alpha-type protein kinase family. ALPK subfamily.

The catalysed reaction is L-threonyl-[myosin heavy-chain] + ATP = O-phospho-L-threonyl-[myosin heavy-chain] + ADP + H(+). Phosphorylates threonine. Not critical for regulating the assembly and disassembly of myosin II filament. This is Myosin heavy chain kinase D (mhkD) from Dictyostelium discoideum (Social amoeba).